A 284-amino-acid polypeptide reads, in one-letter code: Deoxyribonuclease-1 (284 aa).

The signal sequence occupies residues 1-22; the sequence is MRYTGLMGTLLTLVNLLQLAGT. N-linked (GlcNAc...) asparagine glycosylation is present at N40. E100 is an active-site residue. C123 and C126 are oxidised to a cystine. N-linked (GlcNAc...) asparagine glycosylation is present at N128. Residue H156 is part of the active site. C195 and C231 are joined by a disulfide.

Belongs to the DNase I family. It depends on Ca(2+) as a cofactor. Mg(2+) is required as a cofactor. In terms of processing, N-glycosylated. In terms of tissue distribution, highly expressed in the parotid and submandibular gland as well as in the kidney and duodenum (at protein level). Expressed at intermediate level in the ileum, mesenterial lymph nodes, liver, ventral prostate, epididymis, ovary and stomach (at protein level). Expressed at low level in the sublingual, preputial, coagulation and pituitary gland (at protein level). Also present in the lachrymal and thyroid glands, striated muscle, intestine, the urinary bladder and the eye.

It localises to the secreted. The protein localises to the zymogen granule. Its subcellular location is the nucleus envelope. It catalyses the reaction Endonucleolytic cleavage to 5'-phosphodinucleotide and 5'-phosphooligonucleotide end-products.. Serum endocuclease secreted into body fluids by a wide variety of exocrine and endocrine organs. Expressed by non-hematopoietic tissues and preferentially cleaves protein-free DNA. Among other functions, seems to be involved in cell death by apoptosis. Binds specifically to G-actin and blocks actin polymerization. Together with DNASE1L3, plays a key role in degrading neutrophil extracellular traps (NETs). NETs are mainly composed of DNA fibers and are released by neutrophils to bind pathogens during inflammation. Degradation of intravascular NETs by DNASE1 and DNASE1L3 is required to prevent formation of clots that obstruct blood vessels and cause organ damage following inflammation. The sequence is that of Deoxyribonuclease-1 from Mus musculus (Mouse).